The primary structure comprises 262 residues: Ribosomal RNA small subunit methyltransferase A (262 aa).

Residues His19, Leu21, Gly44, Glu65, Asp90, and Asn109 each coordinate S-adenosyl-L-methionine. A disordered region spans residues 218–246 (LPNNLPGPLRERAEEALAGLGHGPDARAE).

The protein belongs to the class I-like SAM-binding methyltransferase superfamily. rRNA adenine N(6)-methyltransferase family. RsmA subfamily.

Its subcellular location is the cytoplasm. It catalyses the reaction adenosine(1518)/adenosine(1519) in 16S rRNA + 4 S-adenosyl-L-methionine = N(6)-dimethyladenosine(1518)/N(6)-dimethyladenosine(1519) in 16S rRNA + 4 S-adenosyl-L-homocysteine + 4 H(+). In terms of biological role, specifically dimethylates two adjacent adenosines (A1518 and A1519) in the loop of a conserved hairpin near the 3'-end of 16S rRNA in the 30S particle. May play a critical role in biogenesis of 30S subunits. The polypeptide is Ribosomal RNA small subunit methyltransferase A (Rubrobacter xylanophilus (strain DSM 9941 / JCM 11954 / NBRC 16129 / PRD-1)).